A 147-amino-acid polypeptide reads, in one-letter code: D-aminoacyl-tRNA deacylase (147 aa).

Positions 136 to 137 (GP) match the Gly-cisPro motif, important for rejection of L-amino acids motif.

Belongs to the DTD family. Homodimer.

It is found in the cytoplasm. The enzyme catalyses glycyl-tRNA(Ala) + H2O = tRNA(Ala) + glycine + H(+). The catalysed reaction is a D-aminoacyl-tRNA + H2O = a tRNA + a D-alpha-amino acid + H(+). Its function is as follows. An aminoacyl-tRNA editing enzyme that deacylates mischarged D-aminoacyl-tRNAs. Also deacylates mischarged glycyl-tRNA(Ala), protecting cells against glycine mischarging by AlaRS. Acts via tRNA-based rather than protein-based catalysis; rejects L-amino acids rather than detecting D-amino acids in the active site. By recycling D-aminoacyl-tRNA to D-amino acids and free tRNA molecules, this enzyme counteracts the toxicity associated with the formation of D-aminoacyl-tRNA entities in vivo and helps enforce protein L-homochirality. In Streptococcus suis (strain 98HAH33), this protein is D-aminoacyl-tRNA deacylase.